We begin with the raw amino-acid sequence, 417 residues long: NADH-quinone oxidoreductase subunit D (417 aa).

It belongs to the complex I 49 kDa subunit family. NDH-1 is composed of 14 different subunits. Subunits NuoB, C, D, E, F, and G constitute the peripheral sector of the complex.

The protein localises to the cell inner membrane. It catalyses the reaction a quinone + NADH + 5 H(+)(in) = a quinol + NAD(+) + 4 H(+)(out). In terms of biological role, NDH-1 shuttles electrons from NADH, via FMN and iron-sulfur (Fe-S) centers, to quinones in the respiratory chain. The immediate electron acceptor for the enzyme in this species is believed to be ubiquinone. Couples the redox reaction to proton translocation (for every two electrons transferred, four hydrogen ions are translocated across the cytoplasmic membrane), and thus conserves the redox energy in a proton gradient. This chain is NADH-quinone oxidoreductase subunit D, found in Ruthia magnifica subsp. Calyptogena magnifica.